The primary structure comprises 479 residues: Anaerobic nitric oxide reductase flavorubredoxin (479 aa).

A zinc metallo-hydrolase region spans residues 30 to 210 (LRGSSYNSYL…PFSRLVTPKI (181 aa)). The Fe cation site is built by His79, Glu81, Asp83, His147, Asp166, and His227. One can recognise a Flavodoxin-like domain in the interval 254–393 (ITIFYDTMSN…LCREHGREIA (140 aa)). Residues 260 to 264 (TMSNN) and 342 to 369 (AFGSHGWSGGAVDRLSTRLQDAGFEMSL) each bind FMN. In terms of domain architecture, Rubredoxin-like spans 423–474 (GPRMQCSVCQWIYDPAKGEPMQDVAPGTPWSEVPDNFLCPECSLGKDVFEEL). Cys428, Cys431, Cys461, and Cys464 together coordinate Fe cation.

In the N-terminal section; belongs to the zinc metallo-hydrolase group 3 family. In terms of assembly, homotetramer. Requires Fe cation as cofactor. The cofactor is FMN.

The protein resides in the cytoplasm. The protein operates within nitrogen metabolism; nitric oxide reduction. Anaerobic nitric oxide reductase; uses NADH to detoxify nitric oxide (NO), protecting several 4Fe-4S NO-sensitive enzymes. Has at least 2 reductase partners, only one of which (NorW, flavorubredoxin reductase) has been identified. NO probably binds to the di-iron center; electrons enter from the NorW at rubredoxin and are transferred sequentially to the FMN center and the di-iron center. Also able to function as an aerobic oxygen reductase. The chain is Anaerobic nitric oxide reductase flavorubredoxin from Shigella boydii serotype 4 (strain Sb227).